Consider the following 356-residue polypeptide: uncharacterized protein (356 aa).

The next 3 helical transmembrane spans lie at 258-275, 290-312, and 325-347; these read SALQ…VFYY, PHWL…TEAL, and LVLL…TLFS.

It localises to the cell membrane. This is an uncharacterized protein from Archaeoglobus fulgidus (strain ATCC 49558 / DSM 4304 / JCM 9628 / NBRC 100126 / VC-16).